A 191-amino-acid polypeptide reads, in one-letter code: uncharacterized protein (191 aa).

The segment at 52 to 112 is disordered; sequence NKQENQTESS…TNKDTNIETN (61 aa). Over residues 57–70 the composition is skewed to polar residues; that stretch reads QTESSDLNNTDSLV. Residues 71-94 are compositionally biased toward low complexity; sequence DSNSDNQTNTTDTSTNNVENLNEN. Residues 138–172 adopt a coiled-coil conformation; that stretch reads QDKISDTERIRFLEEKVSKLERKIRTLSLQMTKIS.

This is an uncharacterized protein from Acanthamoeba polyphaga mimivirus (APMV).